A 264-amino-acid chain; its full sequence is ATP synthase subunit a (264 aa).

The next 6 helical transmembrane spans lie at Thr29–Phe49, Ile90–Ile110, Asp134–Ile154, Ile177–Leu197, Leu208–Val228, and Leu235–Val255.

Belongs to the ATPase A chain family. F-type ATPases have 2 components, CF(1) - the catalytic core - and CF(0) - the membrane proton channel. CF(1) has five subunits: alpha(3), beta(3), gamma(1), delta(1), epsilon(1). CF(0) has three main subunits: a(1), b(2) and c(9-12). The alpha and beta chains form an alternating ring which encloses part of the gamma chain. CF(1) is attached to CF(0) by a central stalk formed by the gamma and epsilon chains, while a peripheral stalk is formed by the delta and b chains.

It localises to the cell inner membrane. Its function is as follows. Key component of the proton channel; it plays a direct role in the translocation of protons across the membrane. In Shewanella loihica (strain ATCC BAA-1088 / PV-4), this protein is ATP synthase subunit a.